Reading from the N-terminus, the 187-residue chain is Elongation factor P (187 aa).

The protein belongs to the elongation factor P family.

The protein resides in the cytoplasm. It functions in the pathway protein biosynthesis; polypeptide chain elongation. Its function is as follows. Involved in peptide bond synthesis. Stimulates efficient translation and peptide-bond synthesis on native or reconstituted 70S ribosomes in vitro. Probably functions indirectly by altering the affinity of the ribosome for aminoacyl-tRNA, thus increasing their reactivity as acceptors for peptidyl transferase. This Chromobacterium violaceum (strain ATCC 12472 / DSM 30191 / JCM 1249 / CCUG 213 / NBRC 12614 / NCIMB 9131 / NCTC 9757 / MK) protein is Elongation factor P.